The chain runs to 580 residues: MKTNNVVYCGNVDNKLVGKEVVIKGWIKKNRKLGSLIFIDIYDITGIVQVVVEEENKFFNNCLQTPKESVVEVIGIVRKRSNVNKELKTGEFEIDLKEFKLYSKAETPPFLIQDDTDGLEDLRLKYRYLDLRRPVMQNNIINRGKIINLFRSFLVKNNFNEIETPYLSKQTPEGARDYLVPTRSKKFFALPQSPQIYKQLLMVSGMDRYFQIARCFRDEDLRADRQPEFTQIDIETSFLSDLEIQSIVQEMFIYVFKEFFNIKLKTPFTRMSYSDAIEYYGSDKPDIRFENKIMNLTNYFKDTNFKIFKSIYESKNRISAVFVEDNIVKQDIKKLEKLAQDNKAKGLAYLYIENGKMSSGSIANVIESEIIEKICKDNKLSNGTLFFVADKYEITQQALGAIRKEFVNISKKIKMNEEFAFLWVVDWPLFEYSEEEKRYVSAHHPFTMPTAETLDTFDKDPANAKAIAYDLVLNGFEIGGGSLRIYNSELQTRMFKFLGLNDSQVKEKFGFIINAFKYGVPPHGGIAFGIERILMIMLNTNSIRDVIAFPKNSSGVDLLFETPSDVSNESLKELGIKLEK.

An L-aspartate-binding site is contributed by Glu173. The tract at residues 195 to 198 (QIYK) is aspartate. Arg217 provides a ligand contact to L-aspartate. Residues 217–219 (RDE) and Gln226 contribute to the ATP site. His443 contributes to the L-aspartate binding site. Glu477 is a binding site for ATP. Arg484 provides a ligand contact to L-aspartate. An ATP-binding site is contributed by 529–532 (GIER).

This sequence belongs to the class-II aminoacyl-tRNA synthetase family. Type 1 subfamily. Homodimer.

Its subcellular location is the cytoplasm. The enzyme catalyses tRNA(Asp) + L-aspartate + ATP = L-aspartyl-tRNA(Asp) + AMP + diphosphate. In terms of biological role, catalyzes the attachment of L-aspartate to tRNA(Asp) in a two-step reaction: L-aspartate is first activated by ATP to form Asp-AMP and then transferred to the acceptor end of tRNA(Asp). In Malacoplasma penetrans (strain HF-2) (Mycoplasma penetrans), this protein is Aspartate--tRNA ligase.